The primary structure comprises 650 residues: 1-deoxy-D-xylulose-5-phosphate synthase (650 aa).

Residues His73 and 114–116 (SHA) each bind thiamine diphosphate. Residue Asp145 coordinates Mg(2+). Thiamine diphosphate is bound by residues 146-147 (GA), Asn174, Tyr285, and Glu367. Asn174 provides a ligand contact to Mg(2+). The segment at 631–650 (MGDEVGADESNQTPAGGGQA) is disordered.

Belongs to the transketolase family. DXPS subfamily. As to quaternary structure, homodimer. Mg(2+) serves as cofactor. The cofactor is thiamine diphosphate.

It catalyses the reaction D-glyceraldehyde 3-phosphate + pyruvate + H(+) = 1-deoxy-D-xylulose 5-phosphate + CO2. Its pathway is metabolic intermediate biosynthesis; 1-deoxy-D-xylulose 5-phosphate biosynthesis; 1-deoxy-D-xylulose 5-phosphate from D-glyceraldehyde 3-phosphate and pyruvate: step 1/1. Functionally, catalyzes the acyloin condensation reaction between C atoms 2 and 3 of pyruvate and glyceraldehyde 3-phosphate to yield 1-deoxy-D-xylulose-5-phosphate (DXP). The polypeptide is 1-deoxy-D-xylulose-5-phosphate synthase (Parafrankia sp. (strain EAN1pec)).